The following is a 1724-amino-acid chain: Protein mono-ADP-ribosyltransferase PARP4 (1724 aa).

One can recognise a BRCT domain in the interval 1 to 94; it reads MVMGIFANCI…RLLDVKNYDP (94 aa). The Nuclear localization signal signature appears at 19 to 25; it reads PQQQKKK. Residues 97–123 are disordered; that stretch reads PLDITPPPDQKASSSEVKTEGLCPDSA. Phosphothreonine occurs at positions 101 and 333. One can recognise a PARP alpha-helical domain in the interval 242–370; that stretch reads SEQLQALLLE…ETNLSKPNPP (129 aa). Positions 369–573 constitute a PARP catalytic domain; it reads PPSLAKYRAL…FSMPGDQIKD (205 aa). Residues 607 to 735 enclose the VIT domain; sequence SSTKAGLQDA…KVLIKITYIT (129 aa). The region spanning 876–1046 is the VWFA domain; that stretch reads EVIICLDCSS…KQIEDQMTRL (171 aa). Position 1236 is a phosphoserine (Ser-1236). Residues 1237 to 1249 carry the Nuclear localization signal motif; the sequence is KRKHRKIPFSKRK. Ser-1335 is modified (phosphoserine). Positions 1408-1452 are disordered; that stretch reads SAQSAPLQHPGGFTTRPSAGTFPELDSPQLHFSLPTDPDPIRGFG. Position 1476 is an asymmetric dimethylarginine (Arg-1476). Ser-1504 carries the post-translational modification Phosphoserine. Positions 1562 to 1724 are interaction with the major vault protein; it reads VCIQHWQDAV…LHRVLHYSQG (163 aa).

It belongs to the ARTD/PARP family. As to quaternary structure, component of the vault ribonucleoprotein particle, at least composed of MVP, PARP4 and one or more vault RNAs (vRNAs). Interacts with TEP1. In terms of tissue distribution, widely expressed; the highest levels are in the kidney; also detected in heart, placenta, lung, liver, skeletal muscle, spleen, leukocytes and pancreas.

Its subcellular location is the cytoplasm. The protein localises to the nucleus. The protein resides in the cytoskeleton. It localises to the spindle. It carries out the reaction L-aspartyl-[protein] + NAD(+) = 4-O-(ADP-D-ribosyl)-L-aspartyl-[protein] + nicotinamide. The enzyme catalyses L-glutamyl-[protein] + NAD(+) = 5-O-(ADP-D-ribosyl)-L-glutamyl-[protein] + nicotinamide. Functionally, mono-ADP-ribosyltransferase that mediates mono-ADP-ribosylation of target proteins. This Homo sapiens (Human) protein is Protein mono-ADP-ribosyltransferase PARP4.